The primary structure comprises 543 residues: CTP synthase (543 aa).

The amidoligase domain stretch occupies residues 1 to 265 (MARYIFITGG…DDEVLAAFAI (265 aa)). A CTP-binding site is contributed by Ser-13. Ser-13 lines the UTP pocket. Residue 14–19 (SLGKGL) participates in ATP binding. Tyr-54 contributes to the L-glutamine binding site. Residue Asp-71 coordinates ATP. Asp-71 and Glu-139 together coordinate Mg(2+). CTP contacts are provided by residues 146–148 (DIE), 186–191 (KTKPTQ), and Lys-222. UTP is bound by residues 186-191 (KTKPTQ) and Lys-222. 238-240 (RDA) lines the ATP pocket. One can recognise a Glutamine amidotransferase type-1 domain in the interval 291–542 (TIAIVGKYTG…VQAALVQSRL (252 aa)). Gly-353 contributes to the L-glutamine binding site. Cys-380 (nucleophile; for glutamine hydrolysis) is an active-site residue. Residues 381-384 (FGMQ), Glu-404, and Arg-470 each bind L-glutamine. Active-site residues include His-515 and Glu-517.

The protein belongs to the CTP synthase family. Homotetramer.

The enzyme catalyses UTP + L-glutamine + ATP + H2O = CTP + L-glutamate + ADP + phosphate + 2 H(+). The catalysed reaction is L-glutamine + H2O = L-glutamate + NH4(+). It catalyses the reaction UTP + NH4(+) + ATP = CTP + ADP + phosphate + 2 H(+). Its pathway is pyrimidine metabolism; CTP biosynthesis via de novo pathway; CTP from UDP: step 2/2. Allosterically activated by GTP, when glutamine is the substrate; GTP has no effect on the reaction when ammonia is the substrate. The allosteric effector GTP functions by stabilizing the protein conformation that binds the tetrahedral intermediate(s) formed during glutamine hydrolysis. Inhibited by the product CTP, via allosteric rather than competitive inhibition. Catalyzes the ATP-dependent amination of UTP to CTP with either L-glutamine or ammonia as the source of nitrogen. Regulates intracellular CTP levels through interactions with the four ribonucleotide triphosphates. The protein is CTP synthase of Rhodopseudomonas palustris (strain ATCC BAA-98 / CGA009).